The primary structure comprises 684 residues: Threonine--tRNA ligase (684 aa).

One can recognise a TGS domain in the interval 1-66; it reads MTVPATDSWP…DTDAEVVPVA (66 aa). Positions 261 to 567 are catalytic; the sequence is DHRKLGSELD…LTEHYAGAFP (307 aa). Positions 366, 417, and 544 each coordinate Zn(2+).

It belongs to the class-II aminoacyl-tRNA synthetase family. In terms of assembly, homodimer. Zn(2+) is required as a cofactor.

It localises to the cytoplasm. It catalyses the reaction tRNA(Thr) + L-threonine + ATP = L-threonyl-tRNA(Thr) + AMP + diphosphate + H(+). Catalyzes the attachment of threonine to tRNA(Thr) in a two-step reaction: L-threonine is first activated by ATP to form Thr-AMP and then transferred to the acceptor end of tRNA(Thr). Also edits incorrectly charged L-seryl-tRNA(Thr). The chain is Threonine--tRNA ligase from Mycobacterium avium (strain 104).